The primary structure comprises 467 residues: Uronate isomerase (467 aa).

Belongs to the metallo-dependent hydrolases superfamily. Uronate isomerase family.

It catalyses the reaction D-glucuronate = D-fructuronate. The enzyme catalyses aldehydo-D-galacturonate = keto-D-tagaturonate. It functions in the pathway carbohydrate metabolism; pentose and glucuronate interconversion. This chain is Uronate isomerase, found in Streptococcus uberis (strain ATCC BAA-854 / 0140J).